The primary structure comprises 137 residues: Small ribosomal subunit protein uS12 (137 aa).

2 disordered regions span residues 1 to 21 (MPTI…KSKS) and 33 to 57 (KVQT…TPRK). Aspartate 102 carries the post-translational modification 3-methylthioaspartic acid.

The protein belongs to the universal ribosomal protein uS12 family. In terms of assembly, part of the 30S ribosomal subunit. Contacts proteins S8 and S17. May interact with IF1 in the 30S initiation complex.

In terms of biological role, with S4 and S5 plays an important role in translational accuracy. Interacts with and stabilizes bases of the 16S rRNA that are involved in tRNA selection in the A site and with the mRNA backbone. Located at the interface of the 30S and 50S subunits, it traverses the body of the 30S subunit contacting proteins on the other side and probably holding the rRNA structure together. The combined cluster of proteins S8, S12 and S17 appears to hold together the shoulder and platform of the 30S subunit. This chain is Small ribosomal subunit protein uS12, found in Streptococcus pneumoniae (strain ATCC 700669 / Spain 23F-1).